The following is a 475-amino-acid chain: Ribulose bisphosphate carboxylase large chain (475 aa).

Positions 1–2 are excised as a propeptide; that stretch reads MS. Residue Pro-3 is modified to N-acetylproline. Lys-14 carries the N6,N6,N6-trimethyllysine modification. Substrate contacts are provided by Asn-123 and Thr-173. The Proton acceptor role is filled by Lys-175. Residue Lys-177 coordinates substrate. Positions 201, 203, and 204 each coordinate Mg(2+). Lys-201 carries the post-translational modification N6-carboxylysine. Residue His-294 is the Proton acceptor of the active site. 3 residues coordinate substrate: Arg-295, His-327, and Ser-379.

It belongs to the RuBisCO large chain family. Type I subfamily. As to quaternary structure, heterohexadecamer of 8 large chains and 8 small chains; disulfide-linked. The disulfide link is formed within the large subunit homodimers. Mg(2+) is required as a cofactor. Post-translationally, the disulfide bond which can form in the large chain dimeric partners within the hexadecamer appears to be associated with oxidative stress and protein turnover.

The protein resides in the plastid. It is found in the chloroplast. The enzyme catalyses 2 (2R)-3-phosphoglycerate + 2 H(+) = D-ribulose 1,5-bisphosphate + CO2 + H2O. The catalysed reaction is D-ribulose 1,5-bisphosphate + O2 = 2-phosphoglycolate + (2R)-3-phosphoglycerate + 2 H(+). In terms of biological role, ruBisCO catalyzes two reactions: the carboxylation of D-ribulose 1,5-bisphosphate, the primary event in carbon dioxide fixation, as well as the oxidative fragmentation of the pentose substrate in the photorespiration process. Both reactions occur simultaneously and in competition at the same active site. The chain is Ribulose bisphosphate carboxylase large chain from Chloranthus spicatus (Chulantree).